A 140-amino-acid polypeptide reads, in one-letter code: Interleukin-4 (140 aa).

The first 20 residues, Met-1–Ser-20, serve as a signal peptide directing secretion. 3 disulfides stabilise this stretch: Cys-25/Cys-107, Cys-47/Cys-87, and Cys-69/Cys-114. 3 N-linked (GlcNAc...) asparagine glycosylation sites follow: Asn-61, Asn-91, and Asn-117.

Belongs to the IL-4/IL-13 family. In terms of assembly, interacts with IL4R. Interacts with IL13RA1.

It localises to the secreted. Cytokine secreted primarily by mast cells, T-cells, eosinophils, and basophils that plays a role in regulating antibody production, hematopoiesis and inflammation, and the development of effector T-cell responses. Induces the expression of class II MHC molecules on resting B-cells. Enhances both secretion and cell surface expression of IgE and IgG1. Also regulates the expression of the low affinity Fc receptor for IgE (CD23) on both lymphocytes and monocytes. Positively regulates IL31RA expression in macrophages. Stimulates autophagy in dendritic cells by interfering with mTORC1 signaling and through the induction of RUFY4. In addition, plays a critical role in higher functions of the normal brain, such as memory and learning. Upon binding to IL4, IL4R receptor dimerizes either with the common IL2R gamma chain/IL2RG to produce the type 1 signaling complex, located mainly on hematopoietic cells, or with the IL13RA1 to produce the type 2 complex, which is also expressed on nonhematopoietic cells. Engagement of both types of receptors initiates JAK3 and to a lower extend JAK1 phosphorylation leading to activation of the signal transducer and activator of transcription 6/STAT6. This is Interleukin-4 (Il4) from Mus musculus (Mouse).